Consider the following 741-residue polypeptide: Cellulose 1,4-beta-cellobiosidase (reducing end) CelS (741 aa).

A signal peptide spans 1 to 27; it reads MVKSRKISILLAVAMLVSIMIPTTAFA. Glu-76 contributes to the substrate binding site. The active-site Proton donor is Glu-87. Substrate-binding positions include Thr-140, Asn-204, Asp-241, Gln-247, and 251-252; that span reads TN. The active-site Nucleophile is the Asp-255. Residues 301–302, 326–327, Tyr-421, Asp-520, and 645–646 contribute to the substrate site; these read KY, WY, and WH. The 67-residue stretch at 673–739 folds into the Dockerin domain; sequence STKLYGDVND…ILKEIDTLPY (67 aa). Ca(2+) contacts are provided by Asp-679, Asn-681, Asp-683, Gly-684, Lys-685, Asp-690, Asp-711, Leu-712, Asn-713, Asp-715, Arg-717, and Asp-722.

It belongs to the glycosyl hydrolase 48 (cellulase L) family.

Its subcellular location is the secreted. It catalyses the reaction Hydrolysis of (1-&gt;4)-beta-D-glucosidic linkages in cellulose and similar substrates, releasing cellobiose from the reducing ends of the chains.. Its activity is regulated as follows. Inhibited by cellobiose and lactose, but not by glucose. Its function is as follows. This enzyme catalyzes the exohydrolysis of 1,4-beta-glucosidic linkages in cellulose with a preference for amorphous or crystalline cellulose over carboxymethyl cellulose. The chain is Cellulose 1,4-beta-cellobiosidase (reducing end) CelS (celS) from Acetivibrio thermocellus (strain ATCC 27405 / DSM 1237 / JCM 9322 / NBRC 103400 / NCIMB 10682 / NRRL B-4536 / VPI 7372) (Clostridium thermocellum).